A 442-amino-acid chain; its full sequence is Ankyrin repeat and MYND domain-containing protein 2 (442 aa).

ANK repeat units lie at residues 45-74 (NGMT…DVNC), 79-108 (HGYT…ETDV), and 159-188 (KLAG…NPLL). 8 residues coordinate Zn(2+): Cys320, Cys323, Cys332, Cys335, Cys341, Cys345, His353, and Cys357. The MYND-type zinc finger occupies 320 to 357 (CTTCGEKGASKRCSVCKMVIYCDQTCQKTHWFAHKKIC). Residues 401-421 (TRICQKNDNPKDSEEGEKESL) show a composition bias toward basic and acidic residues. Residues 401-442 (TRICQKNDNPKDSEEGEKESLQSDAGLEGLQEAAVGPQVSEE) are disordered.

Interacts with the retinal-specific guanylyl cyclase GC1.

It is found in the cell projection. The protein resides in the cilium. Its function is as follows. May be involved in the trafficking of signaling proteins to the cilia. The polypeptide is Ankyrin repeat and MYND domain-containing protein 2 (ANKMY2) (Bos taurus (Bovine)).